A 124-amino-acid polypeptide reads, in one-letter code: Large ribosomal subunit protein bL12 (124 aa).

This sequence belongs to the bacterial ribosomal protein bL12 family. In terms of assembly, homodimer. Part of the ribosomal stalk of the 50S ribosomal subunit. Forms a multimeric L10(L12)X complex, where L10 forms an elongated spine to which 2 to 4 L12 dimers bind in a sequential fashion. Binds GTP-bound translation factors.

Forms part of the ribosomal stalk which helps the ribosome interact with GTP-bound translation factors. Is thus essential for accurate translation. The polypeptide is Large ribosomal subunit protein bL12 (Phocaeicola vulgatus (strain ATCC 8482 / DSM 1447 / JCM 5826 / CCUG 4940 / NBRC 14291 / NCTC 11154) (Bacteroides vulgatus)).